The primary structure comprises 219 residues: UPF0502 protein GSU0233 (219 aa).

Belongs to the UPF0502 family.

This is UPF0502 protein GSU0233 from Geobacter sulfurreducens (strain ATCC 51573 / DSM 12127 / PCA).